Reading from the N-terminus, the 182-residue chain is NADH-dependent FAD reductase (182 aa).

Aspartate 16 contacts NAD(+). Residues asparagine 47–serine 48, cysteine 62–glycine 64, and histidine 98 contribute to the FAD site. Histidine 143 contributes to the NAD(+) binding site.

This sequence belongs to the non-flavoprotein flavin reductase family. As to quaternary structure, homodimer.

The enzyme catalyses FADH2 + NAD(+) = FAD + NADH + 2 H(+). It functions in the pathway antibiotic biosynthesis. With respect to regulation, the SgcE6-SgcC hydroxylation activity decreases in the presence of excess FAD. Its function is as follows. Reductase component of a two-component system involved in the biosynthesis of the enediyne antitumor antibiotic C-1027. SgcE6 provides the FADH(2) required by both the halogenase SgcC3 and the monooxygenase SgcC through free diffusion. Accepts only NADH and FAD as substrates. The polypeptide is NADH-dependent FAD reductase (Streptomyces globisporus).